A 694-amino-acid chain; its full sequence is MAPGQNRVVALVDMDCFFVQVEQRQNPHLRNKPCAVVQYKSWKGGGIIAVSYEARAFGVTRNMWADDAKKLCPDLLLAQVRESRGKANLTKYREASVEVMEIMSYFAVIERASIDEAYIDLTSAVQERLQKLQGQPISADLLPSTYIEGLPRGPTVEETVQKEAIRKQGLLQWLDSLQSDDPTSPDLRLTVGAMIVEEMRAAIESKTGFQCSAGISHNKVLAKLACGLNKPNRQTLVSHGSVPQLFSQMPIRKIRSLGGKLGASVIEVLGIEYMGDLTQFTESQLQSHFGEKNGSWLYAMCRGIEHDPVKPRQLPKTIGCSKNFPGKTALATREQVQWWLLQLALELEERLTKDRNDNDRVATQLVVSIRFQGDRRLSSLRRCCALPRYDAHKMSQDAFAAIRNCNTSGIQTEWSPPLTMLFLCATKFSAAAPPACTDITAFLSSDSSCQPKVPIASSETRTQGSGPAVPTSKEAATSLASFFQKAAKKQRMKETSFVPLNTATEKLSSKPSLVFQSSQTTGSQSFFKQKSLLLQHTQLSNSAAPDPPQASPAAQPSCLPAECVDSGPDDGAVKPVSSKAVSTEMNVAGDSPNVLDSPAYNSQEVTQRATEDQVLCEKCDSLVPVWDMPEHTDYHFALELQKSFLQPCTSKPQAIPAVSPQGKRNPKSPSASSSKRLRPHGMQTLESFFKPLTH.

The UmuC domain occupies 9–258 (VALVDMDCFF…MPIRKIRSLG (250 aa)). Asp-13 and Met-14 together coordinate Mg(2+). Positions 13 and 14 each coordinate Mn(2+). Arg-61 lines the a 2'-deoxyribonucleoside 5'-triphosphate pocket. Residues Asp-115 and Glu-116 each contribute to the Mg(2+) site. Positions 115 and 116 each coordinate Mn(2+). Glu-116 is an active-site residue. The interval 565–598 (DSGPDDGAVKPVSSKAVSTEMNVAGDSPNVLDSP) is disordered. The UBZ3-type zinc finger occupies 609–643 (ATEDQVLCEKCDSLVPVWDMPEHTDYHFALELQKS). Zn(2+)-binding residues include Cys-616, Cys-619, His-631, and His-635. Positions 651 to 694 (KPQAIPAVSPQGKRNPKSPSASSSKRLRPHGMQTLESFFKPLTH) are disordered. Residues Lys-663, Lys-667, and Lys-675 each participate in a glycyl lysine isopeptide (Lys-Gly) (interchain with G-Cter in ubiquitin) cross-link. The PIP-box signature appears at 682–689 (MQTLESFF). Lys-690 is covalently cross-linked (Glycyl lysine isopeptide (Lys-Gly) (interchain with G-Cter in ubiquitin)).

It belongs to the DNA polymerase type-Y family. As to quaternary structure, interacts with REV1. Interacts with monoubiquitinated PCNA, but not unmodified PCNA. Interacts with POLI; this interaction targets POLI to the replication machinery. Interacts with PALB2 and BRCA2; the interactions are direct and are required to sustain the recruitment of POLH at blocked replication forks and to stimulate POLH-dependent DNA synthesis on D loop substrates. Interacts (via C-terminus) with TRAIP. Interacts with ubiquitin. Interacts with POLDIP2. Requires Mg(2+) as cofactor. Mn(2+) serves as cofactor. In terms of processing, monoubiquitinated by RCHY1/PIRH2. Ubiquitination depends on integrity of the UBZ3-type zinc finger domain and is enhanced by TRAIP. Ubiquitination inhibits the ability of PolH to interact with PCNA and to bypass UV-induced lesions. Ubiquitous.

Its subcellular location is the nucleus. The enzyme catalyses DNA(n) + a 2'-deoxyribonucleoside 5'-triphosphate = DNA(n+1) + diphosphate. The enzyme in complex with the DNA substrate binds a third divalent metal cation. The binding of this third divalent cation, which is coordinated by water molecules and two oxygen atoms from DNA and dNTP, is essential for catalyzing the DNA synthesis. Functionally, DNA polymerase specifically involved in the DNA repair by translesion synthesis (TLS). Due to low processivity on both damaged and normal DNA, cooperates with the heterotetrameric (REV3L, REV7, POLD2 and POLD3) POLZ complex for complete bypass of DNA lesions. Inserts one or 2 nucleotide(s) opposite the lesion, the primer is further extended by the tetrameric POLZ complex. In the case of 1,2-intrastrand d(GpG)-cisplatin cross-link, inserts dCTP opposite the 3' guanine. Particularly important for the repair of UV-induced pyrimidine dimers. Although inserts the correct base, may cause base transitions and transversions depending upon the context. May play a role in hypermutation at immunoglobulin genes. Forms a Schiff base with 5'-deoxyribose phosphate at abasic sites, but does not have any lyase activity, preventing the release of the 5'-deoxyribose phosphate (5'-dRP) residue. This covalent trapping of the enzyme by the 5'-dRP residue inhibits its DNA synthetic activity during base excision repair, thereby avoiding high incidence of mutagenesis. Targets POLI to replication foci. The protein is DNA polymerase eta (Polh) of Mus musculus (Mouse).